We begin with the raw amino-acid sequence, 138 residues long: MSELFEEVEVEAYVYPTEDIEKVKKAMLNLIPDLEFEAFDRGDYIILTAKTRSRKALSRLYELFRGQAILDTARSFLEEGYFGEEIIIKVNKQAAYAGVVNFNEESPLGPITIIIRTKDPQRLMKWLAPRTKDGVPIE.

The protein belongs to the UPF0201 family.

This is UPF0201 protein TK1335 from Thermococcus kodakarensis (strain ATCC BAA-918 / JCM 12380 / KOD1) (Pyrococcus kodakaraensis (strain KOD1)).